Here is a 159-residue protein sequence, read N- to C-terminus: Small ribosomal subunit protein uS7 (159 aa).

The protein belongs to the universal ribosomal protein uS7 family. Part of the 30S ribosomal subunit. Contacts proteins S9 and S11.

Functionally, one of the primary rRNA binding proteins, it binds directly to 16S rRNA where it nucleates assembly of the head domain of the 30S subunit. Is located at the subunit interface close to the decoding center, probably blocks exit of the E-site tRNA. The sequence is that of Small ribosomal subunit protein uS7 from Elusimicrobium minutum (strain Pei191).